Here is a 369-residue protein sequence, read N- to C-terminus: Anhydro-N-acetylmuramic acid kinase (369 aa).

An ATP-binding site is contributed by 12–19 (GTSLDGVD).

Belongs to the anhydro-N-acetylmuramic acid kinase family.

It carries out the reaction 1,6-anhydro-N-acetyl-beta-muramate + ATP + H2O = N-acetyl-D-muramate 6-phosphate + ADP + H(+). The protein operates within amino-sugar metabolism; 1,6-anhydro-N-acetylmuramate degradation. It participates in cell wall biogenesis; peptidoglycan recycling. Catalyzes the specific phosphorylation of 1,6-anhydro-N-acetylmuramic acid (anhMurNAc) with the simultaneous cleavage of the 1,6-anhydro ring, generating MurNAc-6-P. Is required for the utilization of anhMurNAc either imported from the medium or derived from its own cell wall murein, and thus plays a role in cell wall recycling. This Escherichia coli O45:K1 (strain S88 / ExPEC) protein is Anhydro-N-acetylmuramic acid kinase.